Consider the following 325-residue polypeptide: Zinc metalloproteinase/disintegrin (325 aa).

Positions 1–39 (KYENVEKGDEAPKKCGVTHTNLESDEPIEKASQLFGTSE) are excised as a propeptide. Gln40 is modified (pyrrolidone carboxylic acid). The Peptidase M12B domain maps to 46-242 (RHIELVIVAD…HNPQRILNEP (197 aa)). His182 lines the Zn(2+) pocket. Glu183 is an active-site residue. Positions 186 and 192 each coordinate Zn(2+). 2 disulfides stabilise this stretch: Cys197–Cys221 and Cys199–Cys204. A propeptide spanning residues 243-257 (LRTDTVSTPVYGNVL) is cleaved from the precursor. The region spanning 250-322 (TPVYGNVLQN…SECESNPWNF (73 aa)) is the Disintegrin domain. Gln258 is subject to Pyrrolidone carboxylic acid. Disulfide bonds link Cys264/Cys287, Cys278/Cys284, Cys283/Cys308, and Cys296/Cys315. The short motif at 300 to 302 (RGD) is the Cell attachment site element.

It belongs to the venom metalloproteinase (M12B) family. P-II subfamily. P-IIe sub-subfamily. Heterodimer of bitisgabonin and gabonin-1 (bitisgabonin-1) or gabonin-2 (bitisgabonin-2); disulfide-linked. Requires Zn(2+) as cofactor. Expressed by the venom gland.

The protein localises to the secreted. In terms of biological role, impairs hemostasis in the envenomed animal. In dimer with gabonin-1 (bitisgabonin-1), is a potent inhibitor of the adhesion of the RGD-dependent integrin alpha-5/beta-1 (ITGA5/ITGB1) to immobilized fibronectin. Its function is as follows. In dimer with gabonin-2 (bitisgabonin-2), preferentially inhibits the adhesion of the alpha-4/beta-1 (ITGA4/ITGB1) and alpha-9/beta-1 (ITGA9/ITGB1) integrins to VCAM-1 and also acts as a strong antagonist of alpha-5/beta-1 (ITGA5/ITGB1). The protein is Zinc metalloproteinase/disintegrin of Bitis gabonica (Gaboon adder).